A 513-amino-acid polypeptide reads, in one-letter code: Calcium-dependent protein kinase 2 (513 aa).

Glycine 2 carries N-myristoyl glycine lipidation. Positions 72 to 326 (YIIDEKLGQG…IEEALNHPWI (255 aa)) constitute a Protein kinase domain. ATP contacts are provided by residues 78–86 (LGQGTYGCV) and lysine 101. The Proton acceptor role is filled by aspartate 192. The J domain autoinhibitory motif signature appears at 345–353 (NLKNFKKEN). The interval 345–380 (NLKNFKKENELKKIALTIIAKHLCDVEINNLRNIFI) is j domain. The J domain EF-hand interaction motif signature appears at 354-363 (ELKKIALTII). EF-hand domains are found at residues 370–405 (VEIN…IGYQ), 406–441 (KIPP…KQTY), 442–477 (LKKE…DDIE), and 480–513 (LIDK…SKKK). Ca(2+) is bound by residues aspartate 383, aspartate 385, serine 387, threonine 389, and glutamate 394. Residues aspartate 455, aspartate 457, asparagine 459, lysine 461, glutamate 466, aspartate 493, asparagine 495, aspartate 497, glutamate 499, and glutamate 504 each contribute to the Ca(2+) site.

The protein belongs to the protein kinase superfamily. Ser/Thr protein kinase family. CDPK subfamily. As to quaternary structure, monomer. It depends on Mg(2+) as a cofactor. Post-translationally, myristoylated; myristoylation may target it to different subcellular compartments. In terms of processing, autophosphorylated in vitro.

It catalyses the reaction L-seryl-[protein] + ATP = O-phospho-L-seryl-[protein] + ADP + H(+). It carries out the reaction L-threonyl-[protein] + ATP = O-phospho-L-threonyl-[protein] + ADP + H(+). With respect to regulation, activated by calcium. Upon calcium binding to the EF-hand domains, the C-terminus of the junction domain (J domain) undergoes a conformational change which results in the dissociation of the pseudo-substrate inhibitory motif from the catalytic domain. This, in turn, may facilitate the autophosphorylation of the activation loop at Thr-232, which leads to the kinase activation. In terms of biological role, calcium-dependent protein kinase which acts as a sensor and effector of intracellular Ca(2+) levels probably in part downstream of cGMP-activated PKG kinase. During male gametogenesis in the mosquito gut, required for male exflagellation, possibly by regulating male gamete exit from the host erythrocytes. Not required for asexual blood stage proliferation. The polypeptide is Calcium-dependent protein kinase 2 (Plasmodium falciparum (isolate K1 / Thailand)).